Consider the following 198-residue polypeptide: FMN-dependent NADH:quinone oxidoreductase 2 (198 aa).

An FMN-binding site is contributed by 136–139 (SRGG).

It belongs to the azoreductase type 1 family. In terms of assembly, homodimer. The cofactor is FMN.

It carries out the reaction 2 a quinone + NADH + H(+) = 2 a 1,4-benzosemiquinone + NAD(+). The enzyme catalyses N,N-dimethyl-1,4-phenylenediamine + anthranilate + 2 NAD(+) = 2-(4-dimethylaminophenyl)diazenylbenzoate + 2 NADH + 2 H(+). Quinone reductase that provides resistance to thiol-specific stress caused by electrophilic quinones. Its function is as follows. Also exhibits azoreductase activity. Catalyzes the reductive cleavage of the azo bond in aromatic azo compounds to the corresponding amines. This is FMN-dependent NADH:quinone oxidoreductase 2 from Clostridium perfringens (strain 13 / Type A).